The sequence spans 311 residues: Aspartate carbamoyltransferase catalytic subunit (311 aa).

Carbamoyl phosphate contacts are provided by arginine 55 and threonine 56. Residue lysine 85 coordinates L-aspartate. Arginine 106, histidine 135, and glutamine 138 together coordinate carbamoyl phosphate. L-aspartate contacts are provided by arginine 168 and arginine 230. Residues leucine 268 and proline 269 each coordinate carbamoyl phosphate.

The protein belongs to the aspartate/ornithine carbamoyltransferase superfamily. ATCase family. As to quaternary structure, heterododecamer (2C3:3R2) of six catalytic PyrB chains organized as two trimers (C3), and six regulatory PyrI chains organized as three dimers (R2).

It catalyses the reaction carbamoyl phosphate + L-aspartate = N-carbamoyl-L-aspartate + phosphate + H(+). It participates in pyrimidine metabolism; UMP biosynthesis via de novo pathway; (S)-dihydroorotate from bicarbonate: step 2/3. In terms of biological role, catalyzes the condensation of carbamoyl phosphate and aspartate to form carbamoyl aspartate and inorganic phosphate, the committed step in the de novo pyrimidine nucleotide biosynthesis pathway. This Yersinia enterocolitica serotype O:8 / biotype 1B (strain NCTC 13174 / 8081) protein is Aspartate carbamoyltransferase catalytic subunit.